The primary structure comprises 86 residues: UPF0297 protein LSL_1110 (86 aa).

The protein belongs to the UPF0297 family.

The sequence is that of UPF0297 protein LSL_1110 from Ligilactobacillus salivarius (strain UCC118) (Lactobacillus salivarius).